The sequence spans 364 residues: Dual-specificity RNA methyltransferase RlmN (364 aa).

Residue glutamate 91 is the Proton acceptor of the active site. Positions 97–333 (ESDRGTLCIS…VTVRKTRGDD (237 aa)) constitute a Radical SAM core domain. A disulfide bond links cysteine 104 and cysteine 338. [4Fe-4S] cluster-binding residues include cysteine 111, cysteine 115, and cysteine 118. Residues 164-165 (GE), serine 196, 218-220 (SLH), and asparagine 295 contribute to the S-adenosyl-L-methionine site. Cysteine 338 serves as the catalytic S-methylcysteine intermediate.

This sequence belongs to the radical SAM superfamily. RlmN family. The cofactor is [4Fe-4S] cluster.

Its subcellular location is the cytoplasm. It carries out the reaction adenosine(2503) in 23S rRNA + 2 reduced [2Fe-2S]-[ferredoxin] + 2 S-adenosyl-L-methionine = 2-methyladenosine(2503) in 23S rRNA + 5'-deoxyadenosine + L-methionine + 2 oxidized [2Fe-2S]-[ferredoxin] + S-adenosyl-L-homocysteine. The enzyme catalyses adenosine(37) in tRNA + 2 reduced [2Fe-2S]-[ferredoxin] + 2 S-adenosyl-L-methionine = 2-methyladenosine(37) in tRNA + 5'-deoxyadenosine + L-methionine + 2 oxidized [2Fe-2S]-[ferredoxin] + S-adenosyl-L-homocysteine. In terms of biological role, specifically methylates position 2 of adenine 2503 in 23S rRNA and position 2 of adenine 37 in tRNAs. m2A2503 modification seems to play a crucial role in the proofreading step occurring at the peptidyl transferase center and thus would serve to optimize ribosomal fidelity. The protein is Dual-specificity RNA methyltransferase RlmN of Neisseria meningitidis serogroup C / serotype 2a (strain ATCC 700532 / DSM 15464 / FAM18).